A 503-amino-acid polypeptide reads, in one-letter code: Probable cytosol aminopeptidase (503 aa).

The Mn(2+) site is built by lysine 274 and aspartate 279. Lysine 286 is an active-site residue. Mn(2+) is bound by residues aspartate 297, aspartate 356, and glutamate 358. The active site involves arginine 360.

It belongs to the peptidase M17 family. Mn(2+) is required as a cofactor.

It localises to the cytoplasm. The catalysed reaction is Release of an N-terminal amino acid, Xaa-|-Yaa-, in which Xaa is preferably Leu, but may be other amino acids including Pro although not Arg or Lys, and Yaa may be Pro. Amino acid amides and methyl esters are also readily hydrolyzed, but rates on arylamides are exceedingly low.. It catalyses the reaction Release of an N-terminal amino acid, preferentially leucine, but not glutamic or aspartic acids.. Functionally, presumably involved in the processing and regular turnover of intracellular proteins. Catalyzes the removal of unsubstituted N-terminal amino acids from various peptides. The sequence is that of Probable cytosol aminopeptidase from Burkholderia multivorans (strain ATCC 17616 / 249).